Here is a 303-residue protein sequence, read N- to C-terminus: Cysteine synthase B (303 aa).

Lys-41 bears the N6-(pyridoxal phosphate)lysine mark. Pyridoxal 5'-phosphate is bound by residues Asn-71, 174 to 178 (GTTGT), and Ser-255.

This sequence belongs to the cysteine synthase/cystathionine beta-synthase family. In terms of assembly, homodimer. Requires pyridoxal 5'-phosphate as cofactor.

It carries out the reaction O-acetyl-L-serine + hydrogen sulfide = L-cysteine + acetate. Its pathway is amino-acid biosynthesis; L-cysteine biosynthesis; L-cysteine from L-serine: step 2/2. In terms of biological role, two cysteine synthase enzymes are found. Both catalyze the same reaction. Cysteine synthase B can also use thiosulfate in place of sulfide to give cysteine thiosulfonate as a product. The protein is Cysteine synthase B (cysM) of Escherichia coli (strain K12).